The primary structure comprises 286 residues: Pantothenate synthetase (286 aa).

Residue 30–37 coordinates ATP; the sequence is MGFLHEGH. Histidine 37 functions as the Proton donor in the catalytic mechanism. Glutamine 61 lines the (R)-pantoate pocket. Position 61 (glutamine 61) interacts with beta-alanine. 147–150 is a binding site for ATP; it reads GLKD. Glutamine 153 contacts (R)-pantoate. Residues valine 176 and 184 to 187 contribute to the ATP site; that span reads KSSR.

It belongs to the pantothenate synthetase family. As to quaternary structure, homodimer.

The protein localises to the cytoplasm. The enzyme catalyses (R)-pantoate + beta-alanine + ATP = (R)-pantothenate + AMP + diphosphate + H(+). Its pathway is cofactor biosynthesis; (R)-pantothenate biosynthesis; (R)-pantothenate from (R)-pantoate and beta-alanine: step 1/1. Its function is as follows. Catalyzes the condensation of pantoate with beta-alanine in an ATP-dependent reaction via a pantoyl-adenylate intermediate. This is Pantothenate synthetase from Bacillus velezensis (strain DSM 23117 / BGSC 10A6 / LMG 26770 / FZB42) (Bacillus amyloliquefaciens subsp. plantarum).